The following is a 112-amino-acid chain: ATP-dependent Clp protease adapter protein ClpS (112 aa).

The protein belongs to the ClpS family. Binds to the N-terminal domain of the chaperone ClpA.

Its function is as follows. Involved in the modulation of the specificity of the ClpAP-mediated ATP-dependent protein degradation. In Rhodococcus opacus (strain B4), this protein is ATP-dependent Clp protease adapter protein ClpS.